The following is a 162-amino-acid chain: Interleukin-15 (162 aa).

The signal sequence occupies residues 1–29; the sequence is MRISKPSLRSTSIQCYLCFLLNSHLITEA. Positions 30 to 48 are excised as a propeptide; that stretch reads GIHVFVWGCISAGLPKTEA. 2 cysteine pairs are disulfide-bonded: cysteine 83–cysteine 133 and cysteine 90–cysteine 136. N-linked (GlcNAc...) asparagine glycosylation is found at asparagine 119 and asparagine 127.

Belongs to the IL-15/IL-21 family.

Its subcellular location is the secreted. Cytokine that plays a major role in the development of inflammatory and protective immune responses to microbial invaders and parasites by modulating immune cells of both the innate and adaptive immune systems. Stimulates the proliferation of natural killer cells, T-cells and B-cells and promotes the secretion of several cytokines. In monocytes, induces the production of IL8 and monocyte chemotactic protein 1/CCL2, two chemokines that attract neutrophils and monocytes respectively to sites of infection. Unlike most cytokines, which are secreted in soluble form, IL15 is expressed in association with its high affinity IL15RA on the surface of IL15-producing cells and delivers signals to target cells that express IL2RB and IL2RG receptor subunits. Binding to its receptor triggers the phosphorylation of JAK1 and JAK3 and the recruitment and subsequent phosphorylation of signal transducer and activator of transcription-3/STAT3 and STAT5. In mast cells, induces the rapid tyrosine phosphorylation of STAT6 and thereby controls mast cell survival and release of cytokines such as IL4. In Cavia porcellus (Guinea pig), this protein is Interleukin-15 (IL15).